The primary structure comprises 290 residues: Endo-1,4-beta-xylanase B (290 aa).

An N-terminal signal peptide occupies residues 1–19 (MVSFNSLLVAVSAATCALA). The N-linked (GlcNAc...) asparagine glycan is linked to asparagine 26. A GH11 domain is found at 34–222 (QSTPAGTGTN…SSGSSTVTVN (189 aa)). Residue glutamate 118 is the Nucleophile of the active site. The Proton donor role is filled by glutamate 209. The interval 223–248 (PAGGVTSPIAPTGPSSVSTTPSGPSS) is disordered. Low complexity predominate over residues 234-248 (TGPSSVSTTPSGPSS). The region spanning 255 to 290 (TCSALYGQCGGQGWTGPTCCSSGTCKFSNNWYSQCL) is the CBM1 domain.

This sequence belongs to the glycosyl hydrolase 11 (cellulase G) family.

Its subcellular location is the secreted. The catalysed reaction is Endohydrolysis of (1-&gt;4)-beta-D-xylosidic linkages in xylans.. Its pathway is glycan degradation; xylan degradation. In terms of biological role, endo-1,4-beta-xylanase involved in the hydrolysis of xylan, a major structural heterogeneous polysaccharide found in plant biomass representing the second most abundant polysaccharide in the biosphere, after cellulose. This chain is Endo-1,4-beta-xylanase B (xynB), found in Phanerodontia chrysosporium (White-rot fungus).